A 511-amino-acid chain; its full sequence is FAD-dependent monooxygenase AOL_s00215g279 (511 aa).

Positions 1-17 are cleaved as a signal peptide; it reads MRFTLYGLLGFASLLHA. Residues 85-256 enclose the FAD-binding PCMH-type domain; it reads CWVNPACIVS…TEFDLRTRYS (172 aa). His122 is modified (pros-8alpha-FAD histidine).

It belongs to the oxygen-dependent FAD-linked oxidoreductase family.

The protein operates within secondary metabolite biosynthesis; terpenoid biosynthesis. Functionally, FAD-dependent monooxygenase; part of the gene cluster that mediates the biosynthesis of sesquiterpenyl epoxy-cyclohexenoids (SECs) such as anthrobotrisins and arthrosporols, metabolites that possess a novel hybrid carbon skeleton consisting of a polyketide-derived epoxycyclohexenol combined with a terpenoid-derived monocyclic sesquiterpenol substructure (PKS-PTS hybrid). The SEC pathway plays an important role for fungal soil colonization via decreasing fungal nematode-capturing ability. Within the pathway, the FAD-dependent monooxygenase AOL_s00215g279 plays a role in the oxygenation of the phenol moiety, most likely in the epoxy formation. The pathway begins with the biosynthesis of 6-methylsalicylic acid (6-MSA), the first precursor of the polyketide-derived epoxycyclohexenol in arthrosporols, by the polyketide synthase (PKS) AOL_s00215g283 via condensation of 1 acetate and 3 malonate units. The 6-methylsalicylic acid decarboxylase AOL_s00215g281 then catalyzes the decarboxylation of 6-methylsalicylic acid to yield m-cresol. The cytochrome P450 monooxygenase AOL_s00215g282 further oxidizes m-cresol to yield toluquinol. With the assistance of the oxidoreductase AOL_s00215g277, the polyprenyl transferase AOL_s00215g276 catalyzes the farnesylation of toluquinol to produce farnesyl hydroquinone, the hybrid precursor for biosynthesis of SECs. Farnesyl hydroquinone undergoes epoxidation and then subsequent dehydrogenation to form farnesyl epoxy-quinone, the first and simplest SEC. The cytochrome P450 monooxygenase AOL_s00215g278 and the FAD-dependent monooxygenase AOL_s00215g279 might be involved in the oxygenation of the phenol moiety, most likely in the epoxy formation. The cytochrome P450 monooxygenases AOL_s00215g274 and AOL_s00215g280 are involved in specific regional ketone reductions at respectively C-4 and C-1 of farnesyl epoxy-quinone PubMed:33823587. The protein is FAD-dependent monooxygenase AOL_s00215g279 of Arthrobotrys oligospora (strain ATCC 24927 / CBS 115.81 / DSM 1491) (Nematode-trapping fungus).